Consider the following 123-residue polypeptide: MAWTPLLLLFLSHCTGSLSQAVLTQPSSLSASPGASASLTCTLCSGINVGTYRIYWYQQKPGSPPQYLLRYKSDSDKQQGSGVPSRFSGSKDASANAGILLISGLQSEDEADYYCMIWHSSAS.

An N-terminal signal peptide occupies residues 1–19; that stretch reads MAWTPLLLLFLSHCTGSLS. Positions 20–44 are framework-1; sequence QAVLTQPSSLSASPGASASLTCTLC. An Ig-like domain is found at 20–123; the sequence is QAVLTQPSSL…YCMIWHSSAS (104 aa). Residues Cys41 and Cys115 are joined by a disulfide bond. The segment at 45-53 is complementarity-determining-1; the sequence is SGINVGTYR. The framework-2 stretch occupies residues 54–70; it reads IYWYQQKPGSPPQYLLR. The disordered stretch occupies residues 68-92; sequence LLRYKSDSDKQQGSGVPSRFSGSKD. The segment at 71–77 is complementarity-determining-2; the sequence is YKSDSDK. Over residues 78–92 the composition is skewed to polar residues; sequence QQGSGVPSRFSGSKD. Residues 78–115 form a framework-3 region; it reads QQGSGVPSRFSGSKDASANAGILLISGLQSEDEADYYC. The tract at residues 116–123 is complementarity-determining-3; sequence MIWHSSAS.

Immunoglobulins are composed of two identical heavy chains and two identical light chains; disulfide-linked.

Its subcellular location is the secreted. The protein resides in the cell membrane. V region of the variable domain of immunoglobulin light chains that participates in the antigen recognition. Immunoglobulins, also known as antibodies, are membrane-bound or secreted glycoproteins produced by B lymphocytes. In the recognition phase of humoral immunity, the membrane-bound immunoglobulins serve as receptors which, upon binding of a specific antigen, trigger the clonal expansion and differentiation of B lymphocytes into immunoglobulins-secreting plasma cells. Secreted immunoglobulins mediate the effector phase of humoral immunity, which results in the elimination of bound antigens. The antigen binding site is formed by the variable domain of one heavy chain, together with that of its associated light chain. Thus, each immunoglobulin has two antigen binding sites with remarkable affinity for a particular antigen. The variable domains are assembled by a process called V-(D)-J rearrangement and can then be subjected to somatic hypermutations which, after exposure to antigen and selection, allow affinity maturation for a particular antigen. This Homo sapiens (Human) protein is Immunoglobulin lambda variable 5-45.